The sequence spans 143 residues: MDQTLSDFGNVFVFLLLGVVFVAGGYLTARMLRPSRPNPVKNSTYECGEEAVGSSWVKFNIRFYVVALIFIIFDVEVVFLFPWATVFRQLGSFALIEALVFAGILILGLVYAWVKGDLDWVRPTPSVPKMPEMPSPRQSAGRD.

3 consecutive transmembrane segments (helical) span residues 8-28 (FGNVFVFLLLGVVFVAGGYLT), 63-83 (FYVVALIFIIFDVEVVFLFPW), and 93-113 (FALIEALVFAGILILGLVYAW).

The protein belongs to the complex I subunit 3 family. As to quaternary structure, NDH-1 is composed of 14 different subunits. Subunits NuoA, H, J, K, L, M, N constitute the membrane sector of the complex.

Its subcellular location is the cell inner membrane. It catalyses the reaction a quinone + NADH + 5 H(+)(in) = a quinol + NAD(+) + 4 H(+)(out). NDH-1 shuttles electrons from NADH, via FMN and iron-sulfur (Fe-S) centers, to quinones in the respiratory chain. The immediate electron acceptor for the enzyme in this species is believed to be a menaquinone. Couples the redox reaction to proton translocation (for every two electrons transferred, four hydrogen ions are translocated across the cytoplasmic membrane), and thus conserves the redox energy in a proton gradient. In Chlorobium luteolum (strain DSM 273 / BCRC 81028 / 2530) (Pelodictyon luteolum), this protein is NADH-quinone oxidoreductase subunit A.